Here is a 1591-residue protein sequence, read N- to C-terminus: Rho guanine nucleotide exchange factor TIAM1 (1591 aa).

The tract at residues 1 to 78 (MGNAESQHVE…AENGLEPFSQ (78 aa)) is disordered. A lipid anchor (N-myristoyl glycine) is attached at Gly2. Over residues 7 to 19 (QHVEHEFYGEKHA) the composition is skewed to basic and acidic residues. Over residues 20-49 (SLGRKHTSRSLRLSHKTRRTRHASSGKVIH) the composition is skewed to basic residues. Low complexity predominate over residues 53–67 (EVSTRSSSTPSIPQS). A Phosphoserine modification is found at Ser231. Disordered regions lie at residues 298–379 (SEGA…GDAA) and 393–422 (MSTTNSESLEEAGSAHSDEQSSGTLSSPGQ). Polar residues-rich tracts occupy residues 300 to 313 (GATNPQISHSNSMQ) and 340 to 361 (TTDTDLLSRRSNATNSSYSPTT). A phosphoserine mark is found at Ser356 and Ser358. Residues 367–377 (GSDSGSSSTGD) show a composition bias toward low complexity. Polar residues predominate over residues 412-422 (QSSGTLSSPGQ). The PH 1 domain maps to 434–549 (VRKAGALAVK…TAIHSACATA (116 aa)). Position 695 is a phosphoserine (Ser695). Positions 765–832 (TPSWFCLPNN…QPEEDIYELL (68 aa)) constitute an RBD domain. Tyr829 carries the phosphotyrosine; by NTRK2 modification. The region spanning 845–908 (SIHIEKSDTA…NNRAADALNS (64 aa)) is the PDZ domain. The interval 939–1034 (SPPHRVDGPA…TGPQLATMRQ (96 aa)) is disordered. The segment covering 958-975 (LTSNPGHSLCSEQGSSAE) has biased composition (polar residues). Residues 977–990 (APEETEGPDLESSD) show a composition bias toward acidic residues. A compositionally biased stretch (low complexity) spans 1014-1024 (PSDQSPSPQDS). Positions 1025–1034 (TGPQLATMRQ) are enriched in polar residues. Residues 1040-1234 (KLRKVICELL…NKVASHINEM (195 aa)) enclose the DH domain. Residues 1261–1397 (DLSMGDLLLH…KAVHSILRDK (137 aa)) form the PH 2 domain. Tyr1323 carries the post-translational modification Phosphotyrosine. Residues Lys1404 and Lys1420 each participate in a glycyl lysine isopeptide (Lys-Gly) (interchain with G-Cter in ubiquitin) cross-link. Residues 1456–1482 (TIDSDAVSASSPEKESQQPPGGGDTDR) are disordered. Position 1519 is a phosphoserine (Ser1519).

It belongs to the TIAM family. In terms of assembly, component of the Par polarity complex, composed of at least phosphorylated PRKCZ, PARD3 and TIAM1. Interacts with NTRK2; mediates the activation of RAC1 by BDNF. Interacts with MAPK8IP2 and CD44. Interacts with BAIAP2. Interacts with EPHA8; regulates clathrin-mediated endocytosis of EPHA8. Interacts with PARD3. Interacts (via PDZ domain) with CNTNAP4, SDC1 and SDC3 (via C-terminus). Ubiquitinated. Undergoes 'Lys-48' ubiquitination at Lys-1404 and Lys-1420 by a CUL3(KBTBD6/7) E3 ubiquitin ligase complex composed of CUL3, RBX1, KBTBD6 and KBTBD7. 'Lys-48' ubiquitination at Lys-1404 and Lys-1420 triggers proteasomal degradation. Ubiquitination at Lys-1404 and Lys-1420 by CUL3(KBTBD6/7) also requires the membrane-associated protein GABARAP and may therefore be spatially restricted within the cell. Found in virtually all analyzed tumor cell lines including B- and T-lymphomas, neuroblastomas, melanomas and carcinomas.

It localises to the cell junction. It is found in the cell membrane. In terms of biological role, guanyl-nucleotide exchange factor that activates RHO-like proteins and connects extracellular signals to cytoskeletal activities. Activates RAC1, CDC42, and to a lesser extent RHOA and their downstream signaling to regulate processes like cell adhesion and cell migration. The chain is Rho guanine nucleotide exchange factor TIAM1 from Homo sapiens (Human).